The chain runs to 222 residues: GTP cyclohydrolase 1 (222 aa).

Zn(2+) is bound by residues Cys111, His114, and Cys182.

It belongs to the GTP cyclohydrolase I family. Toroid-shaped homodecamer, composed of two pentamers of five dimers.

It catalyses the reaction GTP + H2O = 7,8-dihydroneopterin 3'-triphosphate + formate + H(+). It participates in cofactor biosynthesis; 7,8-dihydroneopterin triphosphate biosynthesis; 7,8-dihydroneopterin triphosphate from GTP: step 1/1. The sequence is that of GTP cyclohydrolase 1 from Enterobacter sp. (strain 638).